We begin with the raw amino-acid sequence, 203 residues long: Glycerol-3-phosphate acyltransferase (203 aa).

Transmembrane regions (helical) follow at residues 3–23, 61–81, 87–107, 118–138, 144–164, and 172–192; these read NLILYAVSYLLGSIPSGLILA, ILTVVCDVLKGVLPLIVASFL, VLWTMAVLSVAGHCFSIFLGF, GVLAFFLPVEIIIALVVWFLV, ISSLASLCALIALIASSFIIH, and THAPILIIAFLVVYKHIPNIV.

Belongs to the PlsY family. In terms of assembly, probably interacts with PlsX.

It is found in the cell inner membrane. The enzyme catalyses an acyl phosphate + sn-glycerol 3-phosphate = a 1-acyl-sn-glycero-3-phosphate + phosphate. It participates in lipid metabolism; phospholipid metabolism. Its function is as follows. Catalyzes the transfer of an acyl group from acyl-phosphate (acyl-PO(4)) to glycerol-3-phosphate (G3P) to form lysophosphatidic acid (LPA). This enzyme utilizes acyl-phosphate as fatty acyl donor, but not acyl-CoA or acyl-ACP. The polypeptide is Glycerol-3-phosphate acyltransferase (Campylobacter concisus (strain 13826)).